A 36-amino-acid polypeptide reads, in one-letter code: Pancreatic polypeptide (36 aa).

Y36 carries the tyrosine amide modification.

This sequence belongs to the NPY family.

The protein resides in the secreted. Functionally, hormone secreted by pancreatic cells that acts as a regulator of pancreatic and gastrointestinal functions probably by signaling through the G protein-coupled receptor NPY4R2. This chain is Pancreatic polypeptide (PPY), found in Didelphis virginiana (North American opossum).